A 223-amino-acid polypeptide reads, in one-letter code: Imidazoleglycerol-phosphate dehydratase (223 aa).

This sequence belongs to the imidazoleglycerol-phosphate dehydratase family.

It catalyses the reaction D-erythro-1-(imidazol-4-yl)glycerol 3-phosphate = 3-(imidazol-4-yl)-2-oxopropyl phosphate + H2O. Its pathway is amino-acid biosynthesis; L-histidine biosynthesis; L-histidine from 5-phospho-alpha-D-ribose 1-diphosphate: step 6/9. The chain is Imidazoleglycerol-phosphate dehydratase (HIS3) from Zygosaccharomyces bailii.